The sequence spans 114 residues: Phosphoribosyl-ATP pyrophosphatase (114 aa).

This sequence belongs to the PRA-PH family.

Its subcellular location is the cytoplasm. The catalysed reaction is 1-(5-phospho-beta-D-ribosyl)-ATP + H2O = 1-(5-phospho-beta-D-ribosyl)-5'-AMP + diphosphate + H(+). It participates in amino-acid biosynthesis; L-histidine biosynthesis; L-histidine from 5-phospho-alpha-D-ribose 1-diphosphate: step 2/9. The polypeptide is Phosphoribosyl-ATP pyrophosphatase (Leuconostoc mesenteroides subsp. mesenteroides (strain ATCC 8293 / DSM 20343 / BCRC 11652 / CCM 1803 / JCM 6124 / NCDO 523 / NBRC 100496 / NCIMB 8023 / NCTC 12954 / NRRL B-1118 / 37Y)).